A 296-amino-acid polypeptide reads, in one-letter code: GTPase Era (296 aa).

One can recognise an Era-type G domain in the interval 3-170; sequence KSGFVTIVGR…KELMFKYIPE (168 aa). Positions 11–18 are G1; that stretch reads GRPNVGKS. Position 11 to 18 (11 to 18) interacts with GTP; that stretch reads GRPNVGKS. The segment at 37–41 is G2; it reads QTTRN. The interval 58-61 is G3; it reads DTPG. Residues 58 to 62 and 120 to 123 contribute to the GTP site; these read DTPGI and NKID. Positions 120 to 123 are G4; the sequence is NKID. The interval 149-151 is G5; that stretch reads ISA. In terms of domain architecture, KH type-2 spans 201–278; the sequence is LSEEVPHGIA…YIRLWVKVKE (78 aa).

The protein belongs to the TRAFAC class TrmE-Era-EngA-EngB-Septin-like GTPase superfamily. Era GTPase family. As to quaternary structure, monomer.

It localises to the cytoplasm. The protein localises to the cell membrane. Functionally, an essential GTPase that binds both GDP and GTP, with rapid nucleotide exchange. Plays a role in 16S rRNA processing and 30S ribosomal subunit biogenesis and possibly also in cell cycle regulation and energy metabolism. This chain is GTPase Era, found in Clostridium botulinum (strain Kyoto / Type A2).